The sequence spans 345 residues: Protein RecA (345 aa).

An ATP-binding site is contributed by 67 to 74; the sequence is GPESSGKT.

Belongs to the RecA family.

It is found in the cytoplasm. In terms of biological role, can catalyze the hydrolysis of ATP in the presence of single-stranded DNA, the ATP-dependent uptake of single-stranded DNA by duplex DNA, and the ATP-dependent hybridization of homologous single-stranded DNAs. It interacts with LexA causing its activation and leading to its autocatalytic cleavage. This is Protein RecA from Acidothermus cellulolyticus (strain ATCC 43068 / DSM 8971 / 11B).